The sequence spans 247 residues: NAD(P)H-quinone oxidoreductase subunit K (247 aa).

Positions 63, 64, 128, and 159 each coordinate [4Fe-4S] cluster.

The protein belongs to the complex I 20 kDa subunit family. As to quaternary structure, NDH-1 can be composed of about 15 different subunits; different subcomplexes with different compositions have been identified which probably have different functions. Requires [4Fe-4S] cluster as cofactor.

The protein localises to the cellular thylakoid membrane. It carries out the reaction a plastoquinone + NADH + (n+1) H(+)(in) = a plastoquinol + NAD(+) + n H(+)(out). The catalysed reaction is a plastoquinone + NADPH + (n+1) H(+)(in) = a plastoquinol + NADP(+) + n H(+)(out). Its function is as follows. NDH-1 shuttles electrons from an unknown electron donor, via FMN and iron-sulfur (Fe-S) centers, to quinones in the respiratory and/or the photosynthetic chain. The immediate electron acceptor for the enzyme in this species is believed to be plastoquinone. Couples the redox reaction to proton translocation, and thus conserves the redox energy in a proton gradient. Cyanobacterial NDH-1 also plays a role in inorganic carbon-concentration. The sequence is that of NAD(P)H-quinone oxidoreductase subunit K from Gloeothece citriformis (strain PCC 7424) (Cyanothece sp. (strain PCC 7424)).